A 504-amino-acid polypeptide reads, in one-letter code: Glucose-6-phosphate isomerase (504 aa).

The active-site Proton donor is the glutamate 333. Catalysis depends on residues histidine 364 and lysine 473.

Belongs to the GPI family.

The protein localises to the cytoplasm. It carries out the reaction alpha-D-glucose 6-phosphate = beta-D-fructose 6-phosphate. The protein operates within carbohydrate biosynthesis; gluconeogenesis. Its pathway is carbohydrate degradation; glycolysis; D-glyceraldehyde 3-phosphate and glycerone phosphate from D-glucose: step 2/4. Catalyzes the reversible isomerization of glucose-6-phosphate to fructose-6-phosphate. In Xanthomonas oryzae pv. oryzae (strain MAFF 311018), this protein is Glucose-6-phosphate isomerase.